The following is a 630-amino-acid chain: Chaperone protein HtpG (630 aa).

Residues 1–327 (MSVETYKFDA…SEDLSLNISR (327 aa)) form an a; substrate-binding region. The tract at residues 328–551 (ETLQHSPLID…EGSMDIRTER (224 aa)) is b. The segment covering 483–499 (TKTAKSSDTNNDGKDDT) has biased composition (basic and acidic residues). Residues 483–504 (TKTAKSSDTNNDGKDDTSSSDD) form a disordered region. The tract at residues 552 to 630 (FLIEQKQLSS…INFFIEKSVN (79 aa)) is c.

It belongs to the heat shock protein 90 family. In terms of assembly, homodimer.

The protein resides in the cytoplasm. Molecular chaperone. Has ATPase activity. The polypeptide is Chaperone protein HtpG (Orientia tsutsugamushi (strain Boryong) (Rickettsia tsutsugamushi)).